The chain runs to 326 residues: Biotin synthase (326 aa).

Positions 51–278 (NRVQVSRLIS…KSFVRLSAGR (228 aa)) constitute a Radical SAM core domain. [4Fe-4S] cluster is bound by residues Cys66, Cys70, and Cys73. Residues Cys110, Cys141, Cys201, and Arg273 each contribute to the [2Fe-2S] cluster site.

Belongs to the radical SAM superfamily. Biotin synthase family. As to quaternary structure, homodimer. [4Fe-4S] cluster is required as a cofactor. It depends on [2Fe-2S] cluster as a cofactor.

The catalysed reaction is (4R,5S)-dethiobiotin + (sulfur carrier)-SH + 2 reduced [2Fe-2S]-[ferredoxin] + 2 S-adenosyl-L-methionine = (sulfur carrier)-H + biotin + 2 5'-deoxyadenosine + 2 L-methionine + 2 oxidized [2Fe-2S]-[ferredoxin]. The protein operates within cofactor biosynthesis; biotin biosynthesis; biotin from 7,8-diaminononanoate: step 2/2. In terms of biological role, catalyzes the conversion of dethiobiotin (DTB) to biotin by the insertion of a sulfur atom into dethiobiotin via a radical-based mechanism. The polypeptide is Biotin synthase (Paramagnetospirillum magneticum (strain ATCC 700264 / AMB-1) (Magnetospirillum magneticum)).